The chain runs to 336 residues: Large ribosomal subunit protein uL1m (336 aa).

A mitochondrion-targeting transit peptide spans 1–50 (MAAAVRCLRRVLIHHQRHCLCKMASQASLYPCSVNSLLHNRHFAAAAAAA). Ser-85 carries the post-translational modification Phosphoserine.

It belongs to the universal ribosomal protein uL1 family.

Its subcellular location is the mitochondrion. The protein is Large ribosomal subunit protein uL1m (Mrpl1) of Mus musculus (Mouse).